A 426-amino-acid chain; its full sequence is Glucose-1-phosphate adenylyltransferase (426 aa).

Alpha-D-glucose 1-phosphate-binding positions include Tyr100, Gly165, 180 to 181 (EK), and Ser191.

The protein belongs to the bacterial/plant glucose-1-phosphate adenylyltransferase family. In terms of assembly, homotetramer.

The enzyme catalyses alpha-D-glucose 1-phosphate + ATP + H(+) = ADP-alpha-D-glucose + diphosphate. It functions in the pathway glycan biosynthesis; glycogen biosynthesis. Functionally, involved in the biosynthesis of ADP-glucose, a building block required for the elongation reactions to produce glycogen. Catalyzes the reaction between ATP and alpha-D-glucose 1-phosphate (G1P) to produce pyrophosphate and ADP-Glc. This Acetivibrio thermocellus (strain ATCC 27405 / DSM 1237 / JCM 9322 / NBRC 103400 / NCIMB 10682 / NRRL B-4536 / VPI 7372) (Clostridium thermocellum) protein is Glucose-1-phosphate adenylyltransferase.